Here is an 82-residue protein sequence, read N- to C-terminus: Small ribosomal subunit protein bS18 (82 aa).

The interval 1 to 24 (MKRTNMKKARMEQSRRPKKNPLKA) is disordered.

Belongs to the bacterial ribosomal protein bS18 family. In terms of assembly, part of the 30S ribosomal subunit. Forms a tight heterodimer with protein bS6.

Its function is as follows. Binds as a heterodimer with protein bS6 to the central domain of the 16S rRNA, where it helps stabilize the platform of the 30S subunit. This Corynebacterium jeikeium (strain K411) protein is Small ribosomal subunit protein bS18.